A 226-amino-acid polypeptide reads, in one-letter code: Uracil phosphoribosyltransferase (226 aa).

A GTP-binding site is contributed by 36–40; it reads KGLVK. 5-phospho-alpha-D-ribose 1-diphosphate is bound by residues Arg86, Arg111, and 145 to 153; that span reads DPMLATGST. Uracil is bound by residues Ile211 and 216-218; that span reads GDA. Asp217 contacts 5-phospho-alpha-D-ribose 1-diphosphate.

Belongs to the UPRTase family. It depends on Mg(2+) as a cofactor.

The catalysed reaction is UMP + diphosphate = 5-phospho-alpha-D-ribose 1-diphosphate + uracil. Its pathway is pyrimidine metabolism; UMP biosynthesis via salvage pathway; UMP from uracil: step 1/1. Allosterically activated by GTP. In terms of biological role, catalyzes the conversion of uracil and 5-phospho-alpha-D-ribose 1-diphosphate (PRPP) to UMP and diphosphate. The polypeptide is Uracil phosphoribosyltransferase (Haloquadratum walsbyi (strain DSM 16790 / HBSQ001)).